Consider the following 285-residue polypeptide: 2-dehydro-3-deoxyphosphooctonate aldolase (285 aa).

Belongs to the KdsA family.

It localises to the cytoplasm. It carries out the reaction D-arabinose 5-phosphate + phosphoenolpyruvate + H2O = 3-deoxy-alpha-D-manno-2-octulosonate-8-phosphate + phosphate. The protein operates within carbohydrate biosynthesis; 3-deoxy-D-manno-octulosonate biosynthesis; 3-deoxy-D-manno-octulosonate from D-ribulose 5-phosphate: step 2/3. Its pathway is bacterial outer membrane biogenesis; lipopolysaccharide biosynthesis. This chain is 2-dehydro-3-deoxyphosphooctonate aldolase, found in Polaromonas sp. (strain JS666 / ATCC BAA-500).